The primary structure comprises 173 residues: Atrial gland and califin peptides (173 aa).

The N-terminal stretch at 1 to 21 (MKANTMFIILCLSLSTLCVSS) is a signal peptide. Positions 22 to 34 (QSTSVHGKIFVPN) are excised as a propeptide. Isoleucine amide is present on Ile69. A propeptide spanning residues 73 to 114 (AAGEMEQSEGQNPETKSHSWRKRSVLTPSLSSLGESLESGIS) is cleaved from the precursor. Residues 75–94 (GEMEQSEGQNPETKSHSWRK) are disordered. Cys141 and Cys172 are oxidised to a cystine. Leu152 carries the leucine amide modification.

It belongs to the molluscan ELH family. Califin A consists of a 36-residue large subunit bound by a single disulfide bond to a 18-residue small subunit.

The protein localises to the secreted. In terms of biological role, the atrial gland peptide A and peptide B precursors are the source of the 2 peptides that, upon release from this reproductive system gland, initiate the egg-laying process by exciting the bag cell neurons. These neurons, clustered in neural connectives near the abdominal ganglion, in turn release other peptides that act directly on the ganglion and also, via the circulating hemolymph, on many other organs to control the physiological processes of egg-laying. One of these other peptides is the egg-laying hormone. Functionally, injected in sexually mature animals califin A excites LB and LC cells of the abdominal ganglion and causes egg-laying. The sequence is that of Atrial gland and califin peptides from Aplysia californica (California sea hare).